The primary structure comprises 441 residues: Apolipoprotein N-acyltransferase (441 aa).

The next 7 helical transmembrane spans lie at 23 to 43 (IIFK…SIYL), 45 to 65 (FFEN…GLVL), 75 to 95 (YFWI…LSSI), 97 to 117 (FNLN…YGLL), 133 to 153 (GIFC…WGIF), 156 to 176 (YGFF…AYFI), and 178 to 198 (EGYI…FSGF). Positions 215–441 (INTNISQDQK…LSKEIFNDKK (227 aa)) constitute a CN hydrolase domain. Catalysis depends on E256, which acts as the Proton acceptor. Residue K310 is part of the active site. C359 serves as the catalytic Nucleophile.

The protein belongs to the CN hydrolase family. Apolipoprotein N-acyltransferase subfamily.

The protein resides in the cell inner membrane. The enzyme catalyses N-terminal S-1,2-diacyl-sn-glyceryl-L-cysteinyl-[lipoprotein] + a glycerophospholipid = N-acyl-S-1,2-diacyl-sn-glyceryl-L-cysteinyl-[lipoprotein] + a 2-acyl-sn-glycero-3-phospholipid + H(+). It functions in the pathway protein modification; lipoprotein biosynthesis (N-acyl transfer). Functionally, catalyzes the phospholipid dependent N-acylation of the N-terminal cysteine of apolipoprotein, the last step in lipoprotein maturation. In Campylobacter jejuni subsp. jejuni serotype O:2 (strain ATCC 700819 / NCTC 11168), this protein is Apolipoprotein N-acyltransferase.